A 155-amino-acid polypeptide reads, in one-letter code: Transcription antitermination protein NusB (155 aa).

This sequence belongs to the NusB family.

Its function is as follows. Involved in transcription antitermination. Required for transcription of ribosomal RNA (rRNA) genes. Binds specifically to the boxA antiterminator sequence of the ribosomal RNA (rrn) operons. The polypeptide is Transcription antitermination protein NusB (Aliivibrio fischeri (strain ATCC 700601 / ES114) (Vibrio fischeri)).